Reading from the N-terminus, the 312-residue chain is Methionyl-tRNA formyltransferase (312 aa).

Residue 112-115 (SLLP) participates in (6S)-5,6,7,8-tetrahydrofolate binding.

Belongs to the Fmt family.

It catalyses the reaction L-methionyl-tRNA(fMet) + (6R)-10-formyltetrahydrofolate = N-formyl-L-methionyl-tRNA(fMet) + (6S)-5,6,7,8-tetrahydrofolate + H(+). Functionally, attaches a formyl group to the free amino group of methionyl-tRNA(fMet). The formyl group appears to play a dual role in the initiator identity of N-formylmethionyl-tRNA by promoting its recognition by IF2 and preventing the misappropriation of this tRNA by the elongation apparatus. In Dehalococcoides mccartyi (strain CBDB1), this protein is Methionyl-tRNA formyltransferase.